Reading from the N-terminus, the 35-residue chain is Kappa-theraphotoxin-Tb1a (35 aa).

3 disulfide bridges follow: Cys3/Cys18, Cys10/Cys23, and Cys17/Cys30.

The protein belongs to the neurotoxin 10 (Hwtx-1) family. 59 (Tltx) subfamily. As to quaternary structure, monomer. Expressed by the venom gland.

The protein resides in the secreted. Its function is as follows. Blocks Kv4.2/KCND2 voltage-gated potassium channels (IC(50) is 193.0 nM) by shifting the voltage-dependence of channel activation to more depolarized potentials. The toxin is thought to bind to the S3-S4 linker region of the voltage sensor domain. This Theraphosa blondi (Goliath birdeating spider) protein is Kappa-theraphotoxin-Tb1a.